Reading from the N-terminus, the 40-residue chain is Photosystem II reaction center protein J (40 aa).

A helical membrane pass occupies residues 8–28; that stretch reads IPLWLIGTVTGIIVIGLLGVF.

It belongs to the PsbJ family. PSII is composed of 1 copy each of membrane proteins PsbA, PsbB, PsbC, PsbD, PsbE, PsbF, PsbH, PsbI, PsbJ, PsbK, PsbL, PsbM, PsbT, PsbX, PsbY, PsbZ, Psb30/Ycf12, at least 3 peripheral proteins of the oxygen-evolving complex and a large number of cofactors. It forms dimeric complexes.

It is found in the plastid. The protein localises to the chloroplast thylakoid membrane. One of the components of the core complex of photosystem II (PSII). PSII is a light-driven water:plastoquinone oxidoreductase that uses light energy to abstract electrons from H(2)O, generating O(2) and a proton gradient subsequently used for ATP formation. It consists of a core antenna complex that captures photons, and an electron transfer chain that converts photonic excitation into a charge separation. This Pinus thunbergii (Japanese black pine) protein is Photosystem II reaction center protein J.